The following is a 308-amino-acid chain: Ribosomal RNA small subunit methyltransferase H (308 aa).

Residues 36–38, Asp-55, Phe-86, Asp-103, and Gln-110 contribute to the S-adenosyl-L-methionine site; that span reads GGH.

The protein belongs to the methyltransferase superfamily. RsmH family.

Its subcellular location is the cytoplasm. It carries out the reaction cytidine(1402) in 16S rRNA + S-adenosyl-L-methionine = N(4)-methylcytidine(1402) in 16S rRNA + S-adenosyl-L-homocysteine + H(+). Functionally, specifically methylates the N4 position of cytidine in position 1402 (C1402) of 16S rRNA. In Helicobacter pylori (strain B38), this protein is Ribosomal RNA small subunit methyltransferase H.